The sequence spans 176 residues: 3-hydroxyanthranilate 3,4-dioxygenase (176 aa).

R44 contributes to the O2 binding site. Positions 48, 54, and 92 each coordinate Fe cation. Substrate is bound at residue E54. Positions 96 and 106 each coordinate substrate. Residues C121, C124, C158, and C161 each contribute to the Fe cation site.

Belongs to the 3-HAO family. Homodimer. The cofactor is Fe(2+).

It catalyses the reaction 3-hydroxyanthranilate + O2 = (2Z,4Z)-2-amino-3-carboxymuconate 6-semialdehyde. The protein operates within cofactor biosynthesis; NAD(+) biosynthesis; quinolinate from L-kynurenine: step 3/3. Catalyzes the oxidative ring opening of 3-hydroxyanthranilate to 2-amino-3-carboxymuconate semialdehyde, which spontaneously cyclizes to quinolinate. The protein is 3-hydroxyanthranilate 3,4-dioxygenase of Xanthomonas campestris pv. campestris (strain 8004).